Reading from the N-terminus, the 575-residue chain is Serine/threonine-protein phosphatase 2A regulatory subunit B'' subunit beta (575 aa).

The interval 41–131 (APGRDQPTPG…SQSIPTFYFP (91 aa)) is disordered. One can recognise an EF-hand domain in the interval 388-423 (KTPTSIEYWFRCMDLDGDGALSMFELEYFYEEQCRR). Residues aspartate 401, aspartate 403, aspartate 405, and glutamate 412 each coordinate Ca(2+).

PP2A consists of a common heterodimeric core enzyme, composed of a 36 kDa catalytic subunit (subunit C) and a 65 kDa constant regulatory subunit (PR65 or subunit A), that associates with a variety of regulatory subunits. Proteins that associate with the core dimer include three families of regulatory subunits B (the R2/B/PR55/B55, R3/B''/PR72/PR130/PR59 and R5/B'/B56 families), the 48 kDa variable regulatory subunit, viral proteins, and cell signaling molecules. Interacts with N-terminal region of CDC6. Interacts with NOD2.

Its subcellular location is the nucleus. Its function is as follows. The B regulatory subunit might modulate substrate selectivity and catalytic activity, and might also direct the localization of the catalytic enzyme to a particular subcellular compartment. The sequence is that of Serine/threonine-protein phosphatase 2A regulatory subunit B'' subunit beta (PPP2R3B) from Homo sapiens (Human).